The chain runs to 99 residues: Large ribosomal subunit protein bL21 (99 aa).

Belongs to the bacterial ribosomal protein bL21 family. In terms of assembly, part of the 50S ribosomal subunit. Contacts protein L20.

Its function is as follows. This protein binds to 23S rRNA in the presence of protein L20. This Mesoplasma florum (strain ATCC 33453 / NBRC 100688 / NCTC 11704 / L1) (Acholeplasma florum) protein is Large ribosomal subunit protein bL21.